The primary structure comprises 220 residues: Protein GrpE (220 aa).

Composition is skewed to polar residues over residues 1–12 (MEQGDKQATYNE) and 50–63 (AASTTADPAEQTSV). The segment at 1 to 67 (MEQGDKQATY…AEQTSVEAEE (67 aa)) is disordered.

Belongs to the GrpE family. As to quaternary structure, homodimer.

It localises to the cytoplasm. Its function is as follows. Participates actively in the response to hyperosmotic and heat shock by preventing the aggregation of stress-denatured proteins, in association with DnaK and GrpE. It is the nucleotide exchange factor for DnaK and may function as a thermosensor. Unfolded proteins bind initially to DnaJ; upon interaction with the DnaJ-bound protein, DnaK hydrolyzes its bound ATP, resulting in the formation of a stable complex. GrpE releases ADP from DnaK; ATP binding to DnaK triggers the release of the substrate protein, thus completing the reaction cycle. Several rounds of ATP-dependent interactions between DnaJ, DnaK and GrpE are required for fully efficient folding. The chain is Protein GrpE from Geobacillus thermodenitrificans (strain NG80-2).